Here is a 518-residue protein sequence, read N- to C-terminus: Putative transposase for insertion sequence IS408 (518 aa).

Residues 11 to 94 (LKEVLRLKWA…PDYTALHREL (84 aa)) form the HTH IS408-type domain. A DNA-binding region (H-T-H motif) is located at residues 23–44 (LTHRQISRAIGISVGAVSKFAA). In terms of domain architecture, Integrase catalytic spans 140 to 335 (QQHRAGEKLF…LPVRRYEIAT (196 aa)). The tract at residues 496 to 518 (LPTTPAEWRSPEHENVRGPDYYH) is disordered. Over residues 504–518 (RSPEHENVRGPDYYH) the composition is skewed to basic and acidic residues.

This sequence belongs to the transposase IS21/IS408/IS1162 family.

Required for the transposition of the insertion element. The protein is Putative transposase for insertion sequence IS408 of Burkholderia multivorans (strain ATCC 17616 / 249).